We begin with the raw amino-acid sequence, 344 residues long: Dihydroorotate dehydrogenase (quinone) (344 aa).

Residues A65–K69 and T89 each bind FMN. A substrate-binding site is contributed by K69. N114–F118 serves as a coordination point for substrate. Residues N145 and N178 each contribute to the FMN site. Residue N178 participates in substrate binding. S181 (nucleophile) is an active-site residue. N183 is a substrate binding site. Positions 223 and 251 each coordinate FMN. Residue N252–T253 coordinates substrate. FMN-binding positions include G274, G303, and Y324–S325.

This sequence belongs to the dihydroorotate dehydrogenase family. Type 2 subfamily. As to quaternary structure, monomer. FMN serves as cofactor.

It is found in the cell membrane. The enzyme catalyses (S)-dihydroorotate + a quinone = orotate + a quinol. It participates in pyrimidine metabolism; UMP biosynthesis via de novo pathway; orotate from (S)-dihydroorotate (quinone route): step 1/1. Catalyzes the conversion of dihydroorotate to orotate with quinone as electron acceptor. The protein is Dihydroorotate dehydrogenase (quinone) of Cupriavidus necator (strain ATCC 17699 / DSM 428 / KCTC 22496 / NCIMB 10442 / H16 / Stanier 337) (Ralstonia eutropha).